Here is a 333-residue protein sequence, read N- to C-terminus: Holliday junction branch migration complex subunit RuvB (333 aa).

The segment at 1–181 (MNDILNKEPM…FGISSHMEYY (181 aa)) is large ATPase domain (RuvB-L). ATP-binding positions include Leu-20, Arg-21, Gly-62, Lys-65, Thr-66, Thr-67, 128–130 (EDF), Arg-171, Tyr-181, and Arg-218. Thr-66 is a Mg(2+) binding site. The segment at 182 to 252 (QERDLEEIVK…ITDKALTILD (71 aa)) is small ATPAse domain (RuvB-S). Residues 255–333 (AAGLDYIDQK…HLGYVYNEEE (79 aa)) are head domain (RuvB-H). Positions 291, 310, and 315 each coordinate DNA.

It belongs to the RuvB family. Homohexamer. Forms an RuvA(8)-RuvB(12)-Holliday junction (HJ) complex. HJ DNA is sandwiched between 2 RuvA tetramers; dsDNA enters through RuvA and exits via RuvB. An RuvB hexamer assembles on each DNA strand where it exits the tetramer. Each RuvB hexamer is contacted by two RuvA subunits (via domain III) on 2 adjacent RuvB subunits; this complex drives branch migration. In the full resolvosome a probable DNA-RuvA(4)-RuvB(12)-RuvC(2) complex forms which resolves the HJ.

The protein resides in the cytoplasm. It carries out the reaction ATP + H2O = ADP + phosphate + H(+). Its function is as follows. The RuvA-RuvB-RuvC complex processes Holliday junction (HJ) DNA during genetic recombination and DNA repair, while the RuvA-RuvB complex plays an important role in the rescue of blocked DNA replication forks via replication fork reversal (RFR). RuvA specifically binds to HJ cruciform DNA, conferring on it an open structure. The RuvB hexamer acts as an ATP-dependent pump, pulling dsDNA into and through the RuvAB complex. RuvB forms 2 homohexamers on either side of HJ DNA bound by 1 or 2 RuvA tetramers; 4 subunits per hexamer contact DNA at a time. Coordinated motions by a converter formed by DNA-disengaged RuvB subunits stimulates ATP hydrolysis and nucleotide exchange. Immobilization of the converter enables RuvB to convert the ATP-contained energy into a lever motion, pulling 2 nucleotides of DNA out of the RuvA tetramer per ATP hydrolyzed, thus driving DNA branch migration. The RuvB motors rotate together with the DNA substrate, which together with the progressing nucleotide cycle form the mechanistic basis for DNA recombination by continuous HJ branch migration. Branch migration allows RuvC to scan DNA until it finds its consensus sequence, where it cleaves and resolves cruciform DNA. This Lactococcus lactis subsp. cremoris (strain SK11) protein is Holliday junction branch migration complex subunit RuvB.